The following is a 421-amino-acid chain: 5-hydroxytryptamine receptor 2 (421 aa).

The Extracellular portion of the chain corresponds to 1-21; sequence MLCGRLRHTMNSTTCFFSHRT. Asparagine 11 is a glycosylation site (N-linked (GlcNAc...) asparagine). A helical transmembrane segment spans residues 22–42; that stretch reads VLIGIVGSLIIAVSVVGNVLV. Over 43–59 the chain is Cytoplasmic; the sequence is CLAIFTEPILSHSKSKF. Residues 60–79 form a helical membrane-spanning segment; it reads FIVSLAVADLLLALLVMTFA. The Extracellular portion of the chain corresponds to 80-95; the sequence is LVNSLYGYWLFGETFC. Cysteine 95 and cysteine 210 form a disulfide bridge. The chain crosses the membrane as a helical span at residues 96 to 118; sequence FIWMSADVMCETASIFSICVISY. At 119–138 the chain is on the cytoplasmic side; the sequence is NRLKQVQKPLQYEEFMTTTR. Residues 139–160 form a helical membrane-spanning segment; sequence ALLIIASLWICSFVVSFVPFFL. At 161 to 213 the chain is on the extracellular side; it reads EWHELSMEEIKTIFKDLISDKVKTSDAHTFSFALEQTLGDNRTSNPKPECLFD. The chain crosses the membrane as a helical span at residues 214 to 234; sequence VHFIYSVIYSLFCFYIPCTLM. The Cytoplasmic portion of the chain corresponds to 235 to 274; it reads LRNYLRLFLIAKKHHVRIKNLHRLHRNQGTQGSKAARTLT. A helical membrane pass occupies residues 275-295; sequence IITGTFLACWLPFFIINPIEA. Topologically, residues 296–304 are extracellular; sequence VDEHLIPLE. Residues 305–325 form a helical membrane-spanning segment; the sequence is CFMVTIWLGYFNSCVNPIIYG. Topologically, residues 326-421 are cytoplasmic; it reads TSNSKFRAAF…MLSESDTVFS (96 aa).

Belongs to the G-protein coupled receptor 1 family. As to expression, central nervous system.

It localises to the cell membrane. This is one of the several different receptors for 5-hydroxytryptamine (serotonin). 5-HT plays important roles in various behavioral and physiological processes in aplysia. These include feeding, locomotion, circadian rhythm, learning and memory, synaptic plasticity, and synaptic growth. This receptor is mediated by G proteins that stimulate phospholipase C. In Aplysia californica (California sea hare), this protein is 5-hydroxytryptamine receptor 2 (5HTB2).